The primary structure comprises 304 residues: Mycothiol acetyltransferase (304 aa).

2 consecutive N-acetyltransferase domains span residues 16–155 and 164–304; these read AHVE…RTGL and VALS…YRRA. 1D-myo-inositol 2-(L-cysteinylamino)-2-deoxy-alpha-D-glucopyranoside is bound at residue glutamate 46. 87–89 contacts acetyl-CoA; sequence LVV. 3 residues coordinate 1D-myo-inositol 2-(L-cysteinylamino)-2-deoxy-alpha-D-glucopyranoside: glutamate 190, lysine 230, and glutamate 237. Residues 241-243 and 248-254 contribute to the acetyl-CoA site; these read LGV and AARGLGS. Tyrosine 275 contributes to the 1D-myo-inositol 2-(L-cysteinylamino)-2-deoxy-alpha-D-glucopyranoside binding site.

This sequence belongs to the acetyltransferase family. MshD subfamily. As to quaternary structure, monomer.

It carries out the reaction 1D-myo-inositol 2-(L-cysteinylamino)-2-deoxy-alpha-D-glucopyranoside + acetyl-CoA = mycothiol + CoA + H(+). Functionally, catalyzes the transfer of acetyl from acetyl-CoA to desacetylmycothiol (Cys-GlcN-Ins) to form mycothiol. The polypeptide is Mycothiol acetyltransferase (Clavibacter sepedonicus (Clavibacter michiganensis subsp. sepedonicus)).